The following is a 157-amino-acid chain: 2-C-methyl-D-erythritol 2,4-cyclodiphosphate synthase (157 aa).

A divalent metal cation is bound by residues Asp8 and His10. Residues 8–10 (DVH) and 34–35 (HS) each bind 4-CDP-2-C-methyl-D-erythritol 2-phosphate. Position 42 (His42) interacts with a divalent metal cation. Residues 56–58 (DIG), 132–135 (TTNE), and Arg142 each bind 4-CDP-2-C-methyl-D-erythritol 2-phosphate.

Belongs to the IspF family. As to quaternary structure, homotrimer. The cofactor is a divalent metal cation.

It catalyses the reaction 4-CDP-2-C-methyl-D-erythritol 2-phosphate = 2-C-methyl-D-erythritol 2,4-cyclic diphosphate + CMP. Its pathway is isoprenoid biosynthesis; isopentenyl diphosphate biosynthesis via DXP pathway; isopentenyl diphosphate from 1-deoxy-D-xylulose 5-phosphate: step 4/6. Its function is as follows. Involved in the biosynthesis of isopentenyl diphosphate (IPP) and dimethylallyl diphosphate (DMAPP), two major building blocks of isoprenoid compounds. Catalyzes the conversion of 4-diphosphocytidyl-2-C-methyl-D-erythritol 2-phosphate (CDP-ME2P) to 2-C-methyl-D-erythritol 2,4-cyclodiphosphate (ME-CPP) with a corresponding release of cytidine 5-monophosphate (CMP). This Chlorobium luteolum (strain DSM 273 / BCRC 81028 / 2530) (Pelodictyon luteolum) protein is 2-C-methyl-D-erythritol 2,4-cyclodiphosphate synthase.